Consider the following 64-residue polypeptide: Protein sigN173 (64 aa).

The protein is Protein sigN173 of Dictyostelium discoideum (Social amoeba).